The primary structure comprises 246 residues: Osmotin-like protein TPM-1 (246 aa).

The N-terminal stretch at methionine 1–alanine 21 is a signal peptide. Disulfide bonds link cysteine 30–cysteine 225, cysteine 72–cysteine 82, cysteine 87–cysteine 93, cysteine 141–cysteine 213, cysteine 146–cysteine 196, cysteine 154–cysteine 164, cysteine 168–cysteine 177, and cysteine 178–cysteine 183.

This sequence belongs to the thaumatin family.

Its subcellular location is the vacuole. The catalysed reaction is Endohydrolysis of (1-&gt;3)- or (1-&gt;4)-linkages in beta-D-glucans when the glucose residue whose reducing group is involved in the linkage to be hydrolyzed is itself substituted at C-3.. Antifungal protein that inhibits the growth of several phytopathogenic fungi (e.g. Trichothecium roseum, Fusarium oxysporum, Phytophthora citrophthora and Colletotrichum coccodes). May bind to beta-glucans and have beta-1,3-D-glucanase activity. This Solanum lycopersicum (Tomato) protein is Osmotin-like protein TPM-1.